Reading from the N-terminus, the 323-residue chain is Calcium homeostasis modulator protein 2 (323 aa).

Over 1 to 21 (MAALIAENFRFLSLFFKSKDV) the chain is Cytoplasmic. The interval 14-39 (LFFKSKDVMIFNGLVALGTVGSQELF) is central pore. The helical transmembrane segment at 22-43 (MIFNGLVALGTVGSQELFTVVA) threads the bilayer. The Extracellular segment spans residues 44-52 (FHCPCSPAR). 2 disulfides stabilise this stretch: Cys-46–Cys-130 and Cys-48–Cys-162. Residues 53–76 (NYLYGLAAIGVPALALFLIGVILN) form a helical membrane-spanning segment. At 77–101 (NHTWNLVAECQYRRTKNCSAAPNFL) the chain is on the cytoplasmic side. A helical transmembrane segment spans residues 102–132 (LLSSIVGRAAVAPVTWSVISLLRGEAYVCAL). The Extracellular segment spans residues 133–179 (SEFVNPHSLMVGERSFPVAHATEILARFPCGEGPANLSVFREEVSRR). Positions 145–152 (ERSFPVAH) are hemichannel docking. A helical transmembrane segment spans residues 180–206 (LKYESQLFGWLLIGVVAILVFLTKCLK). Over 207 to 323 (HYCSPLSYRQ…DHVEMSLLPS (117 aa)) the chain is Cytoplasmic. Positions 214–251 (YRQEAYWAQYRANEDQLFQRTAEVHSRVLAANNVRRFF) are intersubunit interaction.

This sequence belongs to the CALHM family. Homo-undecamer. Two undecameric hemichannels can assemble in a head-to-head manner to form a gap junction.

It localises to the cell membrane. It catalyses the reaction ATP(in) = ATP(out). Its function is as follows. Pore-forming subunit of Ca(2+) homeostasis modulator channels. Mediates ATP release from astrocytes and ATP-induced Ca(2+) influx in microglia thus regulating neuronal ATP and Ca(2+) homeostasis, synaptic transmission and neuroinflammatory response. May form intercellular gap junctions. The gating mechanism remains unknown. This is Calcium homeostasis modulator protein 2 (CALHM2) from Bos taurus (Bovine).